Reading from the N-terminus, the 309-residue chain is NAD kinase (309 aa).

Asp-89 acts as the Proton acceptor in catalysis. NAD(+) is bound by residues 89–90 (DG), 163–164 (NE), Arg-191, Asp-193, and 204–209 (TAYSLS).

This sequence belongs to the NAD kinase family. A divalent metal cation is required as a cofactor.

Its subcellular location is the cytoplasm. It carries out the reaction NAD(+) + ATP = ADP + NADP(+) + H(+). Its function is as follows. Involved in the regulation of the intracellular balance of NAD and NADP, and is a key enzyme in the biosynthesis of NADP. Catalyzes specifically the phosphorylation on 2'-hydroxyl of the adenosine moiety of NAD to yield NADP. The protein is NAD kinase of Shewanella halifaxensis (strain HAW-EB4).